The chain runs to 447 residues: uncharacterized protein (447 aa).

Transmembrane regions (helical) follow at residues 28–48, 241–261, and 397–417; these read IVIVSATYSISLDSTVLYPAV, IDASFTSIFYSVFMLSIYYAI, and PFVLNVITVADGPCSFSLSIF.

It is found in the membrane. This is an uncharacterized protein from Schizosaccharomyces pombe (strain 972 / ATCC 24843) (Fission yeast).